The primary structure comprises 297 residues: Probable lipid kinase YegS-like (297 aa).

Positions 2–131 (STFPASLLIL…IDIARVNDKT (130 aa)) constitute a DAGKc domain. Residues Thr-40, 66–72 (GDGTINE), and Thr-93 each bind ATP. Leu-213, Asp-216, and Leu-218 together coordinate Mg(2+). The active-site Proton acceptor is Glu-269.

Belongs to the diacylglycerol/lipid kinase family. YegS lipid kinase subfamily. Mg(2+) is required as a cofactor. Ca(2+) serves as cofactor.

It localises to the cytoplasm. Functionally, probably phosphorylates lipids; the in vivo substrate is unknown. The chain is Probable lipid kinase YegS-like from Klebsiella pneumoniae (strain 342).